The following is a 138-amino-acid chain: Large ribosomal subunit protein uL16 (138 aa).

Residues 1–13 (MLQPKRRKYRKEQ) show a composition bias toward basic residues. Residues 1–24 (MLQPKRRKYRKEQKGRNTGKATRG) form a disordered region.

This sequence belongs to the universal ribosomal protein uL16 family. As to quaternary structure, part of the 50S ribosomal subunit.

Functionally, binds 23S rRNA and is also seen to make contacts with the A and possibly P site tRNAs. The chain is Large ribosomal subunit protein uL16 from Burkholderia ambifaria (strain ATCC BAA-244 / DSM 16087 / CCUG 44356 / LMG 19182 / AMMD) (Burkholderia cepacia (strain AMMD)).